The following is a 482-amino-acid chain: Reduced viability upon starvation protein 167 (482 aa).

Position 2 is an N-acetylserine (Ser-2). Positions 17–254 (FRQKFKMGEQ…YFDLNSDIVE (238 aa)) constitute a BAR domain. Coiled coils occupy residues 31 to 64 (VYED…NGML) and 174 to 204 (AKDE…LKTQ). A Glycyl lysine isopeptide (Lys-Gly) (interchain with G-Cter in ubiquitin) cross-link involves residue Lys-242. A phosphoserine; by FUS3 and PHO85 mark is found at Ser-299, Ser-321, and Ser-379. The tract at residues 382–407 (LTGLGFQQSPQQQQGPPPAYSNPLTS) is disordered. The 62-residue stretch at 421 to 482 (PGVETVTALY…PGNYVQLNKN (62 aa)) folds into the SH3 domain. Residue Lys-481 forms a Glycyl lysine isopeptide (Lys-Gly) (interchain with G-Cter in ubiquitin) linkage.

Binds to actin. Interacts with ABP1, GYL1, GYP5, PCL2 and YBR108W. In terms of processing, phosphorylated redundantly by cyclin-dependent kinase PHO85 in association with PCL1,2-type cyclins or by MAP kinase FUS3. Phosphorylation inhibits interaction with complexes involved in actin cytoskeleton function.

The protein resides in the cytoplasm. The protein localises to the cytoskeleton. Component of a cytoskeletal structure that is required for the formation of endocytic vesicles at the plasma membrane level. Could be implicated in cytoskeletal reorganization in response to environmental stresses and could act in the budding site selection mechanism. The protein is Reduced viability upon starvation protein 167 (RVS167) of Saccharomyces cerevisiae (strain ATCC 204508 / S288c) (Baker's yeast).